The chain runs to 1378 residues: DNA-directed RNA polymerase subunit beta (1378 aa).

This sequence belongs to the RNA polymerase beta chain family. In terms of assembly, the RNAP catalytic core consists of 2 alpha, 1 beta, 1 beta' and 1 omega subunit. When a sigma factor is associated with the core the holoenzyme is formed, which can initiate transcription.

It carries out the reaction RNA(n) + a ribonucleoside 5'-triphosphate = RNA(n+1) + diphosphate. DNA-dependent RNA polymerase catalyzes the transcription of DNA into RNA using the four ribonucleoside triphosphates as substrates. The protein is DNA-directed RNA polymerase subunit beta of Ruegeria pomeroyi (strain ATCC 700808 / DSM 15171 / DSS-3) (Silicibacter pomeroyi).